The following is an 82-amino-acid chain: Small ribosomal subunit protein bS18 (82 aa).

The tract at residues Met-1–Cys-20 is disordered.

It belongs to the bacterial ribosomal protein bS18 family. As to quaternary structure, part of the 30S ribosomal subunit. Forms a tight heterodimer with protein bS6.

Binds as a heterodimer with protein bS6 to the central domain of the 16S rRNA, where it helps stabilize the platform of the 30S subunit. This Chelativorans sp. (strain BNC1) protein is Small ribosomal subunit protein bS18.